The following is a 463-amino-acid chain: Chaperone SurA (463 aa).

The N-terminal stretch at methionine 1–alanine 25 is a signal peptide. 2 PpiC domains span residues glycine 174–glutamate 276 and valine 289–glycine 388. Disordered regions lie at residues glutamine 328–glycine 348 and arginine 432–arginine 463. Over residues asparagine 440–alanine 452 the composition is skewed to low complexity. Residues alanine 453–arginine 463 show a composition bias toward pro residues.

The protein resides in the periplasm. The enzyme catalyses [protein]-peptidylproline (omega=180) = [protein]-peptidylproline (omega=0). In terms of biological role, chaperone involved in the correct folding and assembly of outer membrane proteins. Recognizes specific patterns of aromatic residues and the orientation of their side chains, which are found more frequently in integral outer membrane proteins. May act in both early periplasmic and late outer membrane-associated steps of protein maturation. The chain is Chaperone SurA from Xanthomonas euvesicatoria pv. vesicatoria (strain 85-10) (Xanthomonas campestris pv. vesicatoria).